A 161-amino-acid chain; its full sequence is Xanthine-guanine phosphoribosyltransferase (161 aa).

5-phospho-alpha-D-ribose 1-diphosphate contacts are provided by residues Arg-41–Gly-42 and Asp-95–Thr-103. Asp-96 contacts Mg(2+). Guanine contacts are provided by Asp-99 and Ile-142. Xanthine-binding residues include Asp-99 and Ile-142. GMP-binding positions include Asp-99–Thr-103 and Trp-141–Ile-142.

It belongs to the purine/pyrimidine phosphoribosyltransferase family. XGPT subfamily. In terms of assembly, homotetramer. The cofactor is Mg(2+).

Its subcellular location is the cell inner membrane. It catalyses the reaction GMP + diphosphate = guanine + 5-phospho-alpha-D-ribose 1-diphosphate. It carries out the reaction XMP + diphosphate = xanthine + 5-phospho-alpha-D-ribose 1-diphosphate. The catalysed reaction is IMP + diphosphate = hypoxanthine + 5-phospho-alpha-D-ribose 1-diphosphate. Its pathway is purine metabolism; GMP biosynthesis via salvage pathway; GMP from guanine: step 1/1. It functions in the pathway purine metabolism; XMP biosynthesis via salvage pathway; XMP from xanthine: step 1/1. Its function is as follows. Purine salvage pathway enzyme that catalyzes the transfer of the ribosyl-5-phosphate group from 5-phospho-alpha-D-ribose 1-diphosphate (PRPP) to the N9 position of the 6-oxopurines guanine and xanthine to form the corresponding ribonucleotides GMP (guanosine 5'-monophosphate) and XMP (xanthosine 5'-monophosphate), with the release of PPi. To a lesser extent, also acts on hypoxanthine. The chain is Xanthine-guanine phosphoribosyltransferase from Idiomarina loihiensis (strain ATCC BAA-735 / DSM 15497 / L2-TR).